The following is a 325-amino-acid chain: VSG expression site-associated protein 117A (325 aa).

Positions 1–23 (MKVTIVELVVWLFSVNFFVVVAE) are cleaved as a signal peptide. Asparagine 72, asparagine 290, and asparagine 313 each carry an N-linked (GlcNAc...) asparagine glycan.

Functionally, not known but may be related to activation of the variant surface glycoprotein genes. This Trypanosoma brucei brucei protein is VSG expression site-associated protein 117A.